A 457-amino-acid chain; its full sequence is MSALRRSGYGPSDGPSYGRYYGPGGGDVPVHVPPPLYPPLRPEPPQPPVSWRGRGGAPAETTWPGEGAGGDGYYPSGGAWAEASRAGGGHQEQPPYPGYNSNYWNSVRPRAPYPGSYSVRPELQGQSLNSYANGAYGPPYPPGPGASTASYSGAYYVPGYTQSNYSTEVPNTYRSPGNSPTPMSRWMYSQQDCPTEAPPLRGQVPGYPASQNPGMTLPHYPYGDGNRAVPQSGGTGRPQDDAWASSAYGMGARYPWPSAAPSAPSAGSLYMTESASPWPGNSSPQPPPSPPPQQPKDPSYSYNPSGQGLSRHSFPCSVHQYESPGAVNNDNSDLLDSQVQYSAEPQLYGNASSEHPSNQVPSNNLPEECFSSDEGTPPSIKKIIHVLEKVQFLEQEVEEFVGKKTDKAYWLLEEMLTKELLELDSVETGGQDSVRQARKEAVCKIQAILEKLEKKGL.

The span at 1–20 shows a compositional bias: low complexity; sequence MSALRRSGYGPSDGPSYGRY. A disordered region spans residues 1-104; that stretch reads MSALRRSGYG…PYPGYNSNYW (104 aa). A Phosphoserine modification is found at serine 7. A compositionally biased stretch (pro residues) spans 31 to 48; the sequence is HVPPPLYPPLRPEPPQPP. Residues arginine 41, arginine 54, arginine 108, and arginine 185 each carry the omega-N-methylarginine modification. Disordered stretches follow at residues 128-335 and 348-374; these read LNSY…SDLL and YGNA…SSDE. Polar residues predominate over residues 160-193; that stretch reads YTQSNYSTEVPNTYRSPGNSPTPMSRWMYSQQDC. Residues 255–268 are compositionally biased toward low complexity; it reads PWPSAAPSAPSAGS. Residues 284–295 are compositionally biased toward pro residues; sequence PQPPPSPPPQQP. 2 stretches are compositionally biased toward polar residues: residues 326–335 and 348–365; these read AVNNDNSDLL and YGNA…SNNL. The region spanning 379–456 is the BAG domain; that stretch reads SIKKIIHVLE…AILEKLEKKG (78 aa).

Binds to the ATPase domain of HSP/HSC70 chaperones. Binds to the death domain of TNFRSF12. Binds to the death domain of TNFRSF1A in the absence of TNF and thereby prevents binding of adapter molecules such as TRADD or TRAF2. Interacts with PRKN.

Its subcellular location is the cytoplasm. In terms of biological role, inhibits the chaperone activity of HSP70/HSC70 by promoting substrate release. Prevents constitutive TNFRSF1A signaling. Negative regulator of PRKN translocation to damaged mitochondria. The polypeptide is BAG family molecular chaperone regulator 4 (Bag4) (Mus musculus (Mouse)).